A 149-amino-acid chain; its full sequence is Transcriptional repressor NrdR (149 aa).

The segment at 3 to 33 (CPFCSSEDTKVVDSRTTIDGSTKRRRECNNC) is a zinc-finger region. The 91-residue stretch at 48 to 138 (IYVVKKDNRR…VYKEFDDIKS (91 aa)) folds into the ATP-cone domain.

This sequence belongs to the NrdR family. Requires Zn(2+) as cofactor.

Functionally, negatively regulates transcription of bacterial ribonucleotide reductase nrd genes and operons by binding to NrdR-boxes. This Fusobacterium nucleatum subsp. nucleatum (strain ATCC 25586 / DSM 15643 / BCRC 10681 / CIP 101130 / JCM 8532 / KCTC 2640 / LMG 13131 / VPI 4355) protein is Transcriptional repressor NrdR.